Here is a 188-residue protein sequence, read N- to C-terminus: Large ribosomal subunit protein eL18z (188 aa).

It belongs to the eukaryotic ribosomal protein eL18 family.

In Arabidopsis thaliana (Mouse-ear cress), this protein is Large ribosomal subunit protein eL18z (RPL18A).